The sequence spans 175 residues: 6,7-dimethyl-8-ribityllumazine synthase (175 aa).

Residues Phe24, 58-60 (ALE), and 82-84 (AVI) contribute to the 5-amino-6-(D-ribitylamino)uracil site. Residue 87–88 (ET) coordinates (2S)-2-hydroxy-3-oxobutyl phosphate. His90 (proton donor) is an active-site residue. 5-amino-6-(D-ribitylamino)uracil is bound at residue Asn115. Arg129 contacts (2S)-2-hydroxy-3-oxobutyl phosphate. Positions 151 to 175 (LEPEEDDEDEDEEDEDFDDEETDRR) are disordered. A compositionally biased stretch (acidic residues) spans 152 to 175 (EPEEDDEDEDEEDEDFDDEETDRR).

Belongs to the DMRL synthase family.

It carries out the reaction (2S)-2-hydroxy-3-oxobutyl phosphate + 5-amino-6-(D-ribitylamino)uracil = 6,7-dimethyl-8-(1-D-ribityl)lumazine + phosphate + 2 H2O + H(+). It functions in the pathway cofactor biosynthesis; riboflavin biosynthesis; riboflavin from 2-hydroxy-3-oxobutyl phosphate and 5-amino-6-(D-ribitylamino)uracil: step 1/2. Functionally, catalyzes the formation of 6,7-dimethyl-8-ribityllumazine by condensation of 5-amino-6-(D-ribitylamino)uracil with 3,4-dihydroxy-2-butanone 4-phosphate. This is the penultimate step in the biosynthesis of riboflavin. This chain is 6,7-dimethyl-8-ribityllumazine synthase, found in Bordetella petrii (strain ATCC BAA-461 / DSM 12804 / CCUG 43448).